A 600-amino-acid chain; its full sequence is Elongation factor 4 (600 aa).

Residues 13–194 (DRIRNFCIIA…AIVERIPPPR (182 aa)) form the tr-type G domain. GTP-binding positions include 25–30 (DHGKST) and 141–144 (NKID).

It belongs to the TRAFAC class translation factor GTPase superfamily. Classic translation factor GTPase family. LepA subfamily.

The protein localises to the cell membrane. The enzyme catalyses GTP + H2O = GDP + phosphate + H(+). Its function is as follows. Required for accurate and efficient protein synthesis under certain stress conditions. May act as a fidelity factor of the translation reaction, by catalyzing a one-codon backward translocation of tRNAs on improperly translocated ribosomes. Back-translocation proceeds from a post-translocation (POST) complex to a pre-translocation (PRE) complex, thus giving elongation factor G a second chance to translocate the tRNAs correctly. Binds to ribosomes in a GTP-dependent manner. This is Elongation factor 4 from Rubrobacter xylanophilus (strain DSM 9941 / JCM 11954 / NBRC 16129 / PRD-1).